The sequence spans 147 residues: MSFPESTQLLLKAKKEKGLTFADIGILLGLDEVWVASLFYGQSTASDEEADKLLTTLGLGAELKEILTTPPVKGSLDPVIPTDPLIYRFYEIMQVYGMPMKDVIQEKFGDGIMSAIDFTINVDKVEDPKGDRVKVAMCGKFLPYKKW.

Residues R88, E91, and S114 contribute to the active site.

The protein belongs to the cyanase family.

The catalysed reaction is cyanate + hydrogencarbonate + 3 H(+) = NH4(+) + 2 CO2. Functionally, catalyzes the reaction of cyanate with bicarbonate to produce ammonia and carbon dioxide. In Prochlorococcus marinus (strain NATL2A), this protein is Cyanate hydratase.